Consider the following 44-residue polypeptide: uncharacterized protein (44 aa).

This is an uncharacterized protein from Escherichia coli (strain K12).